The sequence spans 399 residues: MERAIKNFLSQESAGGILLMIAVALAMIMANSPLSGMYQGFLDTEMQVRVGSLDIDKTLIHWINDGLMALFFMLIGLEVKRELLEGALSSAAQASLPTFAAVGGMVFPAGIYLLFNYGDPVTQAGWAIPAATDIAFALGVMALLGSRVPVSLKVFLLALAIIDDLGVVVIIAMFYSTDLSMLSLIVAGIAILGLVGLNRKGVTALGPYGVVGLILWIAVLKSGVHATLAGVIIAFCIPLRAKDGSSPSESLEHSLHPWSTFIILPIFAFANAGVDLSPMSFGDLLSPVPVGIALGLLLGKPLGVLVFSYIGVKLKMAVLPEGMGWKHIAPVALMCGIGFTMSMFISSLAFVGDAEAYGDFARLGILVGSFASAIIGYFWLAKVLPEVDVAKESKKGEIA.

11 helical membrane passes run 14–34, 59–79, 95–115, 124–144, 154–174, 177–197, 213–233, 261–281, 290–310, 331–351, and 363–383; these read AGGI…NSPL, LIHW…GLEV, SLPT…YLLF, AGWA…MALL, VFLL…IAMF, TDLS…LVGL, LILW…GVII, FIIL…PMSF, VGIA…FSYI, VALM…LAFV, and LGIL…LAKV.

The protein belongs to the NhaA Na(+)/H(+) (TC 2.A.33) antiporter family.

Its subcellular location is the cell inner membrane. It carries out the reaction Na(+)(in) + 2 H(+)(out) = Na(+)(out) + 2 H(+)(in). Na(+)/H(+) antiporter that extrudes sodium in exchange for external protons. In Shewanella sediminis (strain HAW-EB3), this protein is Na(+)/H(+) antiporter NhaA.